The chain runs to 362 residues: Peptide chain release factor 1 (362 aa).

N5-methylglutamine is present on glutamine 237. Positions 279-305 (RLQQAEDEKRRSEEESSRRNLVASGDR) are disordered. The span at 282 to 296 (QAEDEKRRSEEESSR) shows a compositional bias: basic and acidic residues.

It belongs to the prokaryotic/mitochondrial release factor family. Post-translationally, methylated by PrmC. Methylation increases the termination efficiency of RF1.

The protein resides in the cytoplasm. Its function is as follows. Peptide chain release factor 1 directs the termination of translation in response to the peptide chain termination codons UAG and UAA. This chain is Peptide chain release factor 1, found in Colwellia psychrerythraea (strain 34H / ATCC BAA-681) (Vibrio psychroerythus).